Reading from the N-terminus, the 344-residue chain is UDP-galactose/UDP-glucose transporter 5B (344 aa).

8 helical membrane-spanning segments follow: residues leucine 16–leucine 36, leucine 56–alanine 76, valine 115–methionine 135, phenylalanine 142–alanine 162, threonine 176–phenylalanine 196, cysteine 220–valine 240, cysteine 246–tyrosine 266, and cysteine 292–glycine 312. The segment at lysine 324–serine 344 is disordered.

It belongs to the nucleotide-sugar transporter family. UDP-galactose:UMP antiporter (TC 2.A.7.11) subfamily.

The protein localises to the membrane. Its function is as follows. Sugar transporter involved in the transport of nucleotide-sugars from cytoplasm into the Golgi and/or the endoplasmic reticulum. The sequence is that of UDP-galactose/UDP-glucose transporter 5B from Arabidopsis thaliana (Mouse-ear cress).